The sequence spans 217 residues: Vesicle transport through interaction with t-SNAREs homolog 1A (217 aa).

Residues 1–192 lie on the Cytoplasmic side of the membrane; that stretch reads MSSDFEGYEQ…GMLRRIIQNR (192 aa). Coiled-coil stretches lie at residues 31-92 and 112-178; these read PDEK…KRSR and ENQR…GKSS. The helical; Anchor for type IV membrane protein transmembrane segment at 193-213 threads the bilayer; it reads ILLVILGIIVVIAILTAIAFF. At 214-217 the chain is on the vesicular side; the sequence is VKGH.

The protein belongs to the VTI1 family. In terms of assembly, interacts with distinct SNARE complexes that contain either STX5 or STX6. Interacts with NAPA and, to a lesser extent, with NAPG. Identified in a complex containing STX6, STX12, VAMP4 and VTI1A. In terms of tissue distribution, widely expressed.

The protein resides in the golgi apparatus membrane. In terms of biological role, V-SNARE that mediates vesicle transport pathways through interactions with t-SNAREs on the target membrane. These interactions are proposed to mediate aspects of the specificity of vesicle trafficking and to promote fusion of the lipid bilayers. Involved in vesicular transport from the late endosomes to the trans-Golgi network. Along with VAMP7, involved in an non-conventional RAB1-dependent traffic route to the cell surface used by KCNIP1 and KCND2. May be concerned with increased secretion of cytokines associated with cellular senescence. This Mus musculus (Mouse) protein is Vesicle transport through interaction with t-SNAREs homolog 1A (Vti1a).